We begin with the raw amino-acid sequence, 391 residues long: Phosphoglycerate kinase (391 aa).

Substrate-binding positions include 21-23 (DLN), Arg-36, 59-62 (HLGR), Arg-113, and Arg-146. ATP contacts are provided by residues Lys-197, Glu-319, and 345–348 (GGDT).

This sequence belongs to the phosphoglycerate kinase family. Monomer.

The protein localises to the cytoplasm. The catalysed reaction is (2R)-3-phosphoglycerate + ATP = (2R)-3-phospho-glyceroyl phosphate + ADP. It functions in the pathway carbohydrate degradation; glycolysis; pyruvate from D-glyceraldehyde 3-phosphate: step 2/5. The chain is Phosphoglycerate kinase from Shewanella sp. (strain MR-7).